The sequence spans 354 residues: Glutamine synthetase cytosolic isozyme 1-3 (354 aa).

Serine 2 bears the N-acetylserine mark. Phosphoserine occurs at positions 2 and 48. The region spanning 19-99 is the GS beta-grasp domain; the sequence is IIAEYIWIGG…VMCDAYTPAG (81 aa). A GS catalytic domain is found at 106-354; the sequence is KRHNAAKIFS…SMIAETTILG (249 aa).

The protein belongs to the glutamine synthetase family. In terms of assembly, homooctamer. Expressed in the pericycle in the region of mature root.

Its subcellular location is the cytoplasm. The enzyme catalyses L-glutamate + NH4(+) + ATP = L-glutamine + ADP + phosphate + H(+). Functionally, low-affinity glutamine synthetase. May contribute to the homeostatic control of glutamine synthesis in roots. The protein is Glutamine synthetase cytosolic isozyme 1-3 (GLN1-3) of Arabidopsis thaliana (Mouse-ear cress).